The sequence spans 381 residues: Alkanesulfonate monooxygenase (381 aa).

It belongs to the SsuD family. In terms of assembly, homotetramer.

It catalyses the reaction an alkanesulfonate + FMNH2 + O2 = an aldehyde + FMN + sulfite + H2O + 2 H(+). Catalyzes the desulfonation of aliphatic sulfonates. The polypeptide is Alkanesulfonate monooxygenase (Escherichia fergusonii (strain ATCC 35469 / DSM 13698 / CCUG 18766 / IAM 14443 / JCM 21226 / LMG 7866 / NBRC 102419 / NCTC 12128 / CDC 0568-73)).